Reading from the N-terminus, the 445-residue chain is Signal recognition particle 54 kDa protein (445 aa).

GTP contacts are provided by residues 102 to 109 (GVQGSGKT), 184 to 188 (DTAGR), and 244 to 247 (TKMD).

It belongs to the GTP-binding SRP family. SRP54 subfamily. Part of the signal recognition particle protein translocation system, which is composed of SRP and FtsY. Archaeal SRP consists of a 7S RNA molecule of 300 nucleotides and two protein subunits: SRP54 and SRP19.

It is found in the cytoplasm. The catalysed reaction is GTP + H2O = GDP + phosphate + H(+). In terms of biological role, involved in targeting and insertion of nascent membrane proteins into the cytoplasmic membrane. Binds to the hydrophobic signal sequence of the ribosome-nascent chain (RNC) as it emerges from the ribosomes. The SRP-RNC complex is then targeted to the cytoplasmic membrane where it interacts with the SRP receptor FtsY. This is Signal recognition particle 54 kDa protein from Sulfurisphaera tokodaii (strain DSM 16993 / JCM 10545 / NBRC 100140 / 7) (Sulfolobus tokodaii).